Reading from the N-terminus, the 142-residue chain is Large ribosomal subunit protein uL13 (142 aa).

Belongs to the universal ribosomal protein uL13 family. In terms of assembly, part of the 50S ribosomal subunit.

This protein is one of the early assembly proteins of the 50S ribosomal subunit, although it is not seen to bind rRNA by itself. It is important during the early stages of 50S assembly. The chain is Large ribosomal subunit protein uL13 from Buchnera aphidicola subsp. Cinara cedri (strain Cc).